Reading from the N-terminus, the 104-residue chain is NADH-quinone oxidoreductase subunit K (104 aa).

A run of 3 helical transmembrane segments spans residues Val-4–Ala-24, Val-31–Phe-51, and Leu-67–Leu-87.

The protein belongs to the complex I subunit 4L family. In terms of assembly, NDH-1 is composed of 14 different subunits. Subunits NuoA, H, J, K, L, M, N constitute the membrane sector of the complex.

It localises to the cell membrane. It catalyses the reaction a quinone + NADH + 5 H(+)(in) = a quinol + NAD(+) + 4 H(+)(out). In terms of biological role, NDH-1 shuttles electrons from NADH, via FMN and iron-sulfur (Fe-S) centers, to quinones in the respiratory chain. The immediate electron acceptor for the enzyme in this species is believed to be a menaquinone. Couples the redox reaction to proton translocation (for every two electrons transferred, four hydrogen ions are translocated across the cytoplasmic membrane), and thus conserves the redox energy in a proton gradient. The sequence is that of NADH-quinone oxidoreductase subunit K from Bacillus cereus (strain ATCC 14579 / DSM 31 / CCUG 7414 / JCM 2152 / NBRC 15305 / NCIMB 9373 / NCTC 2599 / NRRL B-3711).